The chain runs to 466 residues: Fumarate hydratase class II (466 aa).

Substrate contacts are provided by residues 99 to 101, 129 to 132, 139 to 141, and T187; these read SGT, HPND, and SSN. H188 serves as the catalytic Proton donor/acceptor. S318 is a catalytic residue. Residues S319 and 324–326 contribute to the substrate site; that span reads KVN.

It belongs to the class-II fumarase/aspartase family. Fumarase subfamily. As to quaternary structure, homotetramer.

The protein resides in the cytoplasm. It catalyses the reaction (S)-malate = fumarate + H2O. The protein operates within carbohydrate metabolism; tricarboxylic acid cycle; (S)-malate from fumarate: step 1/1. Its function is as follows. Involved in the TCA cycle. Catalyzes the stereospecific interconversion of fumarate to L-malate. The sequence is that of Fumarate hydratase class II from Thermus thermophilus (strain ATCC BAA-163 / DSM 7039 / HB27).